The following is a 181-amino-acid chain: Probable pyruvoyl-dependent arginine decarboxylase (181 aa).

S43 carries the post-translational modification Pyruvic acid (Ser).

Belongs to the PdaD family. Pyruvate serves as cofactor.

The enzyme catalyses L-arginine + H(+) = agmatine + CO2. The sequence is that of Probable pyruvoyl-dependent arginine decarboxylase from Chlorobaculum parvum (strain DSM 263 / NCIMB 8327) (Chlorobium vibrioforme subsp. thiosulfatophilum).